A 344-amino-acid polypeptide reads, in one-letter code: 3-dehydroquinate synthase (344 aa).

NAD(+)-binding positions include 60-65 (DGEEYK), 94-98 (GVISD), 118-119 (TT), K131, K140, and 158-161 (FLNT). Positions 173, 232, and 249 each coordinate Zn(2+).

This sequence belongs to the sugar phosphate cyclases superfamily. Dehydroquinate synthase family. Requires Co(2+) as cofactor. Zn(2+) is required as a cofactor. It depends on NAD(+) as a cofactor.

Its subcellular location is the cytoplasm. The enzyme catalyses 7-phospho-2-dehydro-3-deoxy-D-arabino-heptonate = 3-dehydroquinate + phosphate. Its pathway is metabolic intermediate biosynthesis; chorismate biosynthesis; chorismate from D-erythrose 4-phosphate and phosphoenolpyruvate: step 2/7. Functionally, catalyzes the conversion of 3-deoxy-D-arabino-heptulosonate 7-phosphate (DAHP) to dehydroquinate (DHQ). The protein is 3-dehydroquinate synthase of Campylobacter hominis (strain ATCC BAA-381 / DSM 21671 / CCUG 45161 / LMG 19568 / NCTC 13146 / CH001A).